Here is a 121-residue protein sequence, read N- to C-terminus: Small ribosomal subunit protein uS13 (121 aa).

The interval 97–121 is disordered; sequence VRGQRTRTNARTRRGARKTVAGKKK. Residues 100 to 121 show a composition bias toward basic residues; it reads QRTRTNARTRRGARKTVAGKKK.

The protein belongs to the universal ribosomal protein uS13 family. In terms of assembly, part of the 30S ribosomal subunit. Forms a loose heterodimer with protein S19. Forms two bridges to the 50S subunit in the 70S ribosome.

Functionally, located at the top of the head of the 30S subunit, it contacts several helices of the 16S rRNA. In the 70S ribosome it contacts the 23S rRNA (bridge B1a) and protein L5 of the 50S subunit (bridge B1b), connecting the 2 subunits; these bridges are implicated in subunit movement. Contacts the tRNAs in the A and P-sites. The polypeptide is Small ribosomal subunit protein uS13 (Synechococcus sp. (strain CC9902)).